A 464-amino-acid polypeptide reads, in one-letter code: Argininosuccinate lyase (464 aa).

It belongs to the lyase 1 family. Argininosuccinate lyase subfamily.

The protein localises to the cytoplasm. It catalyses the reaction 2-(N(omega)-L-arginino)succinate = fumarate + L-arginine. It functions in the pathway amino-acid biosynthesis; L-arginine biosynthesis; L-arginine from L-ornithine and carbamoyl phosphate: step 3/3. The sequence is that of Argininosuccinate lyase from Ectopseudomonas mendocina (strain ymp) (Pseudomonas mendocina).